The primary structure comprises 83 residues: MTINFDNATLILEAEGLRCPEPVMMVRKTIRQMADGDTLLIKADDPSTTRDIPSFCRFMDHELIAEDTETLPFRFLIRKGLSA.

Catalysis depends on C19, which acts as the Cysteine persulfide intermediate.

This sequence belongs to the sulfur carrier protein TusA family.

Its subcellular location is the cytoplasm. In terms of biological role, sulfur carrier protein which probably makes part of a sulfur-relay system. This is Sulfur carrier protein TusA from Aliivibrio salmonicida (strain LFI1238) (Vibrio salmonicida (strain LFI1238)).